Here is a 155-residue protein sequence, read N- to C-terminus: Small ribosomal subunit protein uS7 (155 aa).

Belongs to the universal ribosomal protein uS7 family. As to quaternary structure, part of the 30S ribosomal subunit. Contacts proteins S9 and S11.

Functionally, one of the primary rRNA binding proteins, it binds directly to 16S rRNA where it nucleates assembly of the head domain of the 30S subunit. Is located at the subunit interface close to the decoding center, probably blocks exit of the E-site tRNA. This is Small ribosomal subunit protein uS7 from Helicobacter acinonychis (strain Sheeba).